Consider the following 558-residue polypeptide: WW domain-containing adapter protein with coiled-coil (558 aa).

Disordered stretches follow at residues 1–129 (MVMY…WSEH), 159–244 (QRQK…SPAP), and 321–461 (VAQQ…APGR). Over residues 22–32 (QPYQTLKYSSK) the composition is skewed to polar residues. 2 stretches are compositionally biased toward basic and acidic residues: residues 33–46 (SHPD…RDSN) and 56–70 (RRSD…DNTG). Basic residues predominate over residues 72–82 (GRAKAIHPHRG). The span at 99–116 (NHSSLHSSNSHSNPNKSS) shows a compositional bias: low complexity. The WW domain maps to 120–153 (FEPADDWSEHISSSGKKYYYNCRTEVSQWEKPKE). Over residues 175–184 (PKDRDYRREA) the composition is skewed to basic and acidic residues. A compositionally biased stretch (polar residues) spans 188 to 200 (TPASYSSTKSSIA). The segment covering 204–217 (PSSLTPSSSSAAVS) has biased composition (low complexity). Composition is skewed to polar residues over residues 223–234 (NSASSASGSTVP) and 321–378 (VAQQ…MTVK). Positions 402–431 (SPRTLQRQSSQRSPSPGPNHMGSNSSSSSN) are enriched in low complexity. Over residues 432–443 (NGGGGGGQGPGV) the composition is skewed to gly residues. Residues 529 to 555 (QATLREQRILFLRQQIKELEKLKNQNS) adopt a coiled-coil conformation.

It is found in the nucleus. Acts as a linker between gene transcription and histone H2B monoubiquitination at 'Lys-120' (H2BK120ub1). Positive regulator of amino acid starvation-induced autophagy. Positively regulates MTOR activity. May negatively regulate the ubiquitin proteasome pathway. This is WW domain-containing adapter protein with coiled-coil (waca) from Danio rerio (Zebrafish).